A 62-amino-acid polypeptide reads, in one-letter code: MDSFSSLFMKLCCISTDKTGSKKSDRKNKNKIKDYMEHDYYKITIVPGSSSTSTSSWYYTHA.

Belongs to the orthopoxviruses A37.5 protein family.

The sequence is that of Protein A37.5 homolog (A40_5R) from Homo sapiens (Human).